Here is a 573-residue protein sequence, read N- to C-terminus: 2-succinyl-5-enolpyruvyl-6-hydroxy-3-cyclohexene-1-carboxylate synthase (573 aa).

This sequence belongs to the TPP enzyme family. MenD subfamily. Homodimer. Requires Mg(2+) as cofactor. Mn(2+) serves as cofactor. Thiamine diphosphate is required as a cofactor.

It carries out the reaction isochorismate + 2-oxoglutarate + H(+) = 5-enolpyruvoyl-6-hydroxy-2-succinyl-cyclohex-3-ene-1-carboxylate + CO2. The protein operates within quinol/quinone metabolism; 1,4-dihydroxy-2-naphthoate biosynthesis; 1,4-dihydroxy-2-naphthoate from chorismate: step 2/7. Its pathway is quinol/quinone metabolism; menaquinone biosynthesis. Catalyzes the thiamine diphosphate-dependent decarboxylation of 2-oxoglutarate and the subsequent addition of the resulting succinic semialdehyde-thiamine pyrophosphate anion to isochorismate to yield 2-succinyl-5-enolpyruvyl-6-hydroxy-3-cyclohexene-1-carboxylate (SEPHCHC). The chain is 2-succinyl-5-enolpyruvyl-6-hydroxy-3-cyclohexene-1-carboxylate synthase from Shewanella sp. (strain MR-4).